The sequence spans 176 residues: Translation initiation factor IF-3 (176 aa).

Belongs to the IF-3 family. In terms of assembly, monomer.

The protein localises to the cytoplasm. Its function is as follows. IF-3 binds to the 30S ribosomal subunit and shifts the equilibrium between 70S ribosomes and their 50S and 30S subunits in favor of the free subunits, thus enhancing the availability of 30S subunits on which protein synthesis initiation begins. This chain is Translation initiation factor IF-3, found in Streptococcus uberis (strain ATCC BAA-854 / 0140J).